Consider the following 714-residue polypeptide: Polyribonucleotide nucleotidyltransferase (714 aa).

Asp-489 and Asp-495 together coordinate Mg(2+). The KH domain maps to 556-615 (PKIDTIKIDVDKIKVVIGKGGETIDKIIAETGVKIDIDEEGNVSIYSSDQDAINRAKEII). One can recognise an S1 motif domain in the interval 625–693 (GEVYHAKVVR…DKGRIDASMK (69 aa)). Residues 691 to 714 (SMKALVPRPPKPEKSEAKKEGKHD) are disordered. A compositionally biased stretch (basic and acidic residues) spans 700 to 714 (PKPEKSEAKKEGKHD).

The protein belongs to the polyribonucleotide nucleotidyltransferase family. Mg(2+) is required as a cofactor.

Its subcellular location is the cytoplasm. It carries out the reaction RNA(n+1) + phosphate = RNA(n) + a ribonucleoside 5'-diphosphate. Functionally, involved in mRNA degradation. Catalyzes the phosphorolysis of single-stranded polyribonucleotides processively in the 3'- to 5'-direction. The protein is Polyribonucleotide nucleotidyltransferase of Streptococcus equi subsp. equi (strain 4047).